Consider the following 603-residue polypeptide: Cholinesterase (603 aa).

The signal sequence occupies residues 1–29 (MQTQHTKVTQTHFLLWILLLCMPFGKSHT). A glycan (N-linked (GlcNAc...) asparagine) is linked at asparagine 86. Cysteines 94 and 121 form a disulfide. N-linked (GlcNAc...) asparagine glycosylation occurs at asparagine 135. 145–146 (GG) provides a ligand contact to substrate. Residue serine 227 is the Acyl-ester intermediate of the active site. Phosphoserine is present on serine 227. Asparagine 270 carries an N-linked (GlcNAc...) asparagine glycan. Cysteine 281 and cysteine 292 are disulfide-bonded. The active-site Charge relay system is the glutamate 354. A glycan (N-linked (GlcNAc...) asparagine) is linked at asparagine 370. A disulfide bridge links cysteine 429 with cysteine 548. The active-site Charge relay system is histidine 467. N-linked (GlcNAc...) asparagine glycans are attached at residues asparagine 484, asparagine 510, and asparagine 515.

It belongs to the type-B carboxylesterase/lipase family. Homotetramer; disulfide-linked. Dimer of dimers. As to expression, present in most cells except erythrocytes.

It localises to the secreted. It catalyses the reaction an acylcholine + H2O = a carboxylate + choline + H(+). In terms of biological role, esterase with broad substrate specificity. Contributes to the inactivation of the neurotransmitter acetylcholine. Can degrade neurotoxic organophosphate esters. This chain is Cholinesterase (Bche), found in Mus musculus (Mouse).